The primary structure comprises 928 residues: Eukaryotic translation initiation factor 3 subunit C (928 aa).

Disordered stretches follow at residues 1–37 and 157–286; these read MSRF…SDDE and FREA…EDGE. Residues 11–20 show a composition bias toward acidic residues; that stretch reads SESESSEEEV. Residues 22-33 are compositionally biased toward polar residues; sequence TQFNNKAQNFQF. 4 positions are modified to phosphoserine: Ser-34, Ser-165, Ser-177, and Ser-186. Over residues 162 to 171 the composition is skewed to acidic residues; sequence DQESDVDEGE. Over residues 172–184 the composition is skewed to basic and acidic residues; sequence GDVHDSDADRAGD. Positions 215 to 240 are enriched in acidic residues; the sequence is DDDDSEDSIDWDPDTESETESSEDEN. Residues 245 to 264 are compositionally biased toward basic and acidic residues; sequence MRERFLKRTTEKEDKDDDKR. Basic residues predominate over residues 265-277; the sequence is KDKRKEQKHKVRK. The PCI domain maps to 656–832; the sequence is FHMHINLELL…ETVVMHRSEP (177 aa). The tract at residues 864–928 is disordered; sequence FFQRGNMGNR…QQQVHTIDEE (65 aa). Residues 898 to 909 show a composition bias toward basic residues; the sequence is QRNRNQRGHHKQ. Residues 910 to 921 show a composition bias toward low complexity; sequence NQQQNQQQQQQQ.

This sequence belongs to the eIF-3 subunit C family. As to quaternary structure, component of the eukaryotic translation initiation factor 3 (eIF-3) complex. The eIF-3 complex interacts with pix.

The protein resides in the cytoplasm. In terms of biological role, component of the eukaryotic translation initiation factor 3 (eIF-3) complex, which is involved in protein synthesis of a specialized repertoire of mRNAs and, together with other initiation factors, stimulates binding of mRNA and methionyl-tRNAi to the 40S ribosome. The eIF-3 complex specifically targets and initiates translation of a subset of mRNAs involved in cell proliferation. The sequence is that of Eukaryotic translation initiation factor 3 subunit C from Drosophila grimshawi (Hawaiian fruit fly).